Here is a 163-residue protein sequence, read N- to C-terminus: Large ribosomal subunit protein uL10 (163 aa).

It belongs to the universal ribosomal protein uL10 family. As to quaternary structure, part of the ribosomal stalk of the 50S ribosomal subunit. The N-terminus interacts with L11 and the large rRNA to form the base of the stalk. The C-terminus forms an elongated spine to which L12 dimers bind in a sequential fashion forming a multimeric L10(L12)X complex.

Functionally, forms part of the ribosomal stalk, playing a central role in the interaction of the ribosome with GTP-bound translation factors. The chain is Large ribosomal subunit protein uL10 (rplJ) from Haemophilus influenzae (strain ATCC 51907 / DSM 11121 / KW20 / Rd).